Reading from the N-terminus, the 127-residue chain is Fumarate reductase subunit C (127 aa).

3 consecutive transmembrane segments (helical) span residues 30 to 50, 58 to 78, and 107 to 127; these read ATVL…GCLV, GWLA…ALLG, and IIVL…LIVV.

This sequence belongs to the FrdC family. As to quaternary structure, part of an enzyme complex containing four subunits: a flavoprotein (FrdA), an iron-sulfur protein (FrdB), and two hydrophobic anchor proteins (FrdC and FrdD).

Its subcellular location is the cell inner membrane. In terms of biological role, anchors the catalytic components of the fumarate reductase complex to the cell membrane, binds quinones. This Vibrio parahaemolyticus serotype O3:K6 (strain RIMD 2210633) protein is Fumarate reductase subunit C.